The sequence spans 609 residues: Dihydroxy-acid dehydratase (609 aa).

A Mg(2+)-binding site is contributed by Asp81. Cys122 is a [2Fe-2S] cluster binding site. Mg(2+) contacts are provided by Asp123 and Lys124. The residue at position 124 (Lys124) is an N6-carboxylysine. [2Fe-2S] cluster is bound at residue Cys195. Glu491 is a Mg(2+) binding site. Ser517 acts as the Proton acceptor in catalysis.

The protein belongs to the IlvD/Edd family. Homodimer. [2Fe-2S] cluster serves as cofactor. The cofactor is Mg(2+).

The enzyme catalyses (2R)-2,3-dihydroxy-3-methylbutanoate = 3-methyl-2-oxobutanoate + H2O. It carries out the reaction (2R,3R)-2,3-dihydroxy-3-methylpentanoate = (S)-3-methyl-2-oxopentanoate + H2O. It functions in the pathway amino-acid biosynthesis; L-isoleucine biosynthesis; L-isoleucine from 2-oxobutanoate: step 3/4. It participates in amino-acid biosynthesis; L-valine biosynthesis; L-valine from pyruvate: step 3/4. Its function is as follows. Functions in the biosynthesis of branched-chain amino acids. Catalyzes the dehydration of (2R,3R)-2,3-dihydroxy-3-methylpentanoate (2,3-dihydroxy-3-methylvalerate) into 2-oxo-3-methylpentanoate (2-oxo-3-methylvalerate) and of (2R)-2,3-dihydroxy-3-methylbutanoate (2,3-dihydroxyisovalerate) into 2-oxo-3-methylbutanoate (2-oxoisovalerate), the penultimate precursor to L-isoleucine and L-valine, respectively. The chain is Dihydroxy-acid dehydratase from Acinetobacter baumannii (strain ACICU).